Consider the following 504-residue polypeptide: MQDHQHVPIDIQTSKLLDWLVDRRHCNLKWQSLVLTIREKINTAIQDMPESQEIAQLLSGSYIHYFHCLRIVDLLKGTEASTKNIFGRYSSQRMKDWQEIISLYEKDNTYLVELSSLLVRNVNYEIPSLKKQIAKCQQLQQDYSRKEEEGQAGAAEMREQFYHSCKQYGITGDNVRRELLALVKDLPSQLAEIGAGAQSLGEAIDLYQACVEFVCDSPTEQVLPMLRYVQPKGNSTVYEWRTGTEPSVVERPQLEDPPEQVQEDEIDWGDFGLEAVSDSGNIISAETPGIDWGISLESESKDAGADKIDWGDNAVASEITVLETGTEAPEGVARGSDALTLLEYPETRNQFIDELMELEIFLSQRAVEMSEEADILSVSQFQLAPAILQGQTKEKMLSLVSTLQHLIGQLTSLDLQHLFMILASPRYVDRVTELLQQKLKQSQLLALKKDLMVEKQQEALQEQAALEPKLDLLLEKTRELQKLIEADISKRYNGRPVNLMGTSV.

3 short sequence motifs (shuffled ATG8-binding motif) span residues 266 to 269 (IDWG), 290 to 293 (IDWG), and 308 to 311 (IDWG). The required for interaction with UFL1 and mediates interaction with CHEK1 stretch occupies residues 268–504 (WGDFGLEAVS…RPVNLMGTSV (237 aa)). The segment at 353 to 368 (DELMELEIFLSQRAVE) is RPL10a-binding domain (RBD). Lys448 participates in a covalent cross-link: Glycyl lysine isopeptide (Lys-Gly) (interchain with G-Cter in SUMO2).

The protein belongs to the CDK5RAP3 family. Substrate adapter component of the UFM1 ribosome E3 ligase (UREL) complex, composed of UFL1, DDRGK1 and CDK5RAP3. Interaction with UFL1 anchors CDK5RAP3 in the cytoplasm, preventing its translocation to the nucleus which allows expression of the CCND1 cyclin and progression of cells through the G1/S transition. Interacts with ATG8 family proteins MAP1LC3A, MAP1LC3B, GABARAP, GABARAPL1 and GABARAPL2. Interacts with CDK5R1; competes with CDK5RAP1 and CDK5RAP2. Interacts with RELA. Interacts with CHEK1; may negatively regulate CHEK1 and thereby stimulate entry into mitosis. Interacts with CDKN2A/ARF and MDM2; forms a ternary complex involved in regulation of p53/TP53. Interacts with MAPK14. Interacts with CCNB1. Interacts with TUBG1; may regulate CDK5RAP3 in mitotic G2/M transition checkpoint. Post-translationally, may be phosphorylated by CDK5. Ubiquitinated. Probably triggers proteasomal degradation and is negatively regulated by UFL1. In terms of processing, may be ufmylated. Post-translationally, cleaved by caspases early during apoptosis, the resulting peptides may play a role in rupture of the nuclear envelope. In terms of tissue distribution, expressed in vascular endothelium. Up-regulated in failing heart. Highly expressed in the ventricular section in subacute and chronic ischemic heart failure.

Its subcellular location is the endoplasmic reticulum membrane. The protein resides in the cytoplasm. The protein localises to the nucleus. It localises to the cytoskeleton. It is found in the microtubule organizing center. Its subcellular location is the centrosome. Functionally, substrate adapter of E3 ligase complexes mediating ufmylation, the covalent attachment of the ubiquitin-like modifier UFM1 to substrate proteins, and which is involved in various processes, such as ribosome recycling and reticulophagy (also called ER-phagy). As part of the UREL complex, plays a key role in ribosome recycling by promoting mono-ufmylation of RPL26/uL24 subunit of the 60S ribosome. Ufmylation of RPL26/uL24 occurs on free 60S ribosomes following ribosome dissociation: it weakens the junction between post-termination 60S subunits and SEC61 translocons, promoting release and recycling of the large ribosomal subunit from the endoplasmic reticulum membrane. Ufmylation of RPL26/uL24 and subsequent 60S ribosome recycling either take place after normal termination of translation or after ribosome stalling during cotranslational translocation at the endoplasmic reticulum. Within the UREL complex, CDK5RAP3 acts as a substrate adapter that constrains UFL1 ligase activity to mono-ufmylate RPL26/uL24 at 'Lys-134'. The UREL complex is also involved in reticulophagy in response to endoplasmic reticulum stress by promoting ufmylation of proteins such as CYB5R3, thereby promoting lysosomal degradation of ufmylated proteins. Also acts as a regulator of transcription: negatively regulates NF-kappa-B-mediated gene transcription through the control of RELA phosphorylation. Also regulates mitotic G2/M transition checkpoint and mitotic G2 DNA damage checkpoint. Through its interaction with CDKN2A/ARF and MDM2 may induce MDM2-dependent p53/TP53 ubiquitination, stabilization and activation in the nucleus, thereby promoting G1 cell cycle arrest and inhibition of cell proliferation. May also play a role in the rupture of the nuclear envelope during apoptosis. May regulate MAPK14 activity by regulating its dephosphorylation by PPM1D/WIP1. Required for liver development. The polypeptide is CDK5 regulatory subunit-associated protein 3 (Rattus norvegicus (Rat)).